Reading from the N-terminus, the 245-residue chain is MRYKITVEYNGSNFSGWQKQQHSANSIQEKIENAIFNFSGEKVTLYCGGRTDAGVHALGQVAHFDMEKEFELYRIRNAINYHLKSIPIVVLNAEVVDDAFHARFSAKKRYYEYRIVNRYAPAALETGYVWQVFSPLDVNIMREAAKHLLGKHDLSSFRSKDCQAANPIRTIDDIDIIQNGNHIHIKISAISFLHNQVRIIVGTLVEFGKNRTNPQEMLNILNQCKRSAAGVTAPPFGLYLVKIDY.

D52 (nucleophile) is an active-site residue. Residue Y111 participates in substrate binding.

Belongs to the tRNA pseudouridine synthase TruA family. As to quaternary structure, homodimer.

The catalysed reaction is uridine(38/39/40) in tRNA = pseudouridine(38/39/40) in tRNA. Formation of pseudouridine at positions 38, 39 and 40 in the anticodon stem and loop of transfer RNAs. This chain is tRNA pseudouridine synthase A, found in Wolbachia pipientis wMel.